Reading from the N-terminus, the 2647-residue chain is Filamin-A (2647 aa).

A compositionally biased stretch (low complexity) spans Met1–Ala15. The tract at residues Met1–Ala39 is disordered. Ser2 bears the N-acetylserine mark. The tract at residues Ser2–Pro274 is actin-binding. Position 11 is a phosphoserine (Ser11). A compositionally biased stretch (basic and acidic residues) spans Asp22–Ala39. Glycyl lysine isopeptide (Lys-Gly) (interchain with G-Cter in ubiquitin) cross-links involve residues Lys42, Lys43, and Lys135. Calponin-homology (CH) domains lie at Lys43–Ser149 and Gln166–Leu269. Positions Pro271–Thr294 are disordered. Filamin repeat units lie at residues Arg276–Val374, Lys376–Val474, Gly475–Val570, Gly571–Ile663, Pro667–Val763, Gly764–Val866, Glu867–Val965, Ser966–Ala1061, Val1062–Val1154, Val1155–Val1249, Glu1250–Val1349, Thr1350–Val1442, His1443–Val1539, Leu1540–Ala1636, and Val1649–Ala1740. Lys299 is covalently cross-linked (Glycyl lysine isopeptide (Lys-Gly) (interchain with G-Cter in SUMO1); alternate). Lys299 is covalently cross-linked (Glycyl lysine isopeptide (Lys-Gly) (interchain with G-Cter in SUMO2); alternate). 2 positions are modified to N6-acetyllysine: Lys376 and Lys508. N6-acetyllysine occurs at positions 700, 781, 837, 865, and 906. Residues Ser968 and Ser1055 each carry the phosphoserine modification. An N6-acetyllysine; alternate modification is found at Lys1071. Residue Lys1071 is modified to N6-succinyllysine; alternate. Phosphoserine is present on residues Ser1081 and Ser1084. Position 1089 is a phosphothreonine (Thr1089). Phosphoserine is present on residues Ser1301 and Ser1338. The segment at His1361–Gly1382 is disordered. N6-acetyllysine is present on Lys1372. Residues Ser1459 and Ser1533 each carry the phosphoserine modification. The interval Pro1490 to Ala1607 is interaction with furin. Lys1538 bears the N6-acetyllysine mark. 2 positions are modified to phosphoserine: Ser1630 and Ser1734. Positions Leu1741 to Val1778 are hinge 1. Filamin repeat units lie at residues Gly1779 to Val1860, Asp1861 to Ala1950, Arg1951 to Ile2039, Ser2042 to Ser2131, Val2132 to Val2230, Leu2233 to Val2325, Ser2327 to Val2420, and Gly2424 to Val2516. Position 1835 is a phosphoserine (Ser1835). 10 positions are modified to phosphoserine: Ser1967, Ser2053, Ser2128, Ser2152, Ser2158, Ser2163, Ser2180, Ser2284, Ser2327, and Ser2329. Position 2336 is a phosphothreonine (Thr2336). Phosphoserine occurs at positions 2338, 2370, 2414, 2510, 2523, and 2526. The tract at residues Thr2517–Gly2551 is hinge 2. The self-association site, tail stretch occupies residues Thr2517–Pro2647. The stretch at Pro2552–Val2646 is one Filamin 24 repeat. N6-acetyllysine; alternate is present on Lys2569. N6-succinyllysine; alternate is present on Lys2569. The residue at position 2575 (Lys2575) is an N6-acetyllysine. Residue Thr2599 is modified to Phosphothreonine. An N6-acetyllysine mark is found at Lys2607 and Lys2621.

It belongs to the filamin family. Homodimer. Interacts with PDLIM2. Interacts with RFLNA and RFLNB. Interacts with FCGR1A, FLNB, FURIN, HSPB7, INPPL1, KCND2, MYOT, MYOZ1, ARHGAP24, PSEN1, PSEN2 and ECSCR. Also interacts with various other binding partners in addition to filamentous actin. Interacts (via N-terminus) with MIS18BP1 (via N-terminus). Interacts (via N-terminus) with TAF1B. Interacts with TMEM67 (via C-terminus) and MKS1. Interacts (via actin-binding domain) with MICALL2 (via CH domain). Interacts (via filamin repeat 5) with SYK; docks SYK to the plasma membrane. Interacts (via filamin repeats 19 and 21) with DRD3; increased PKA-mediated phosphorylation at Ser-2152. Interacts (via filamin repeat 21) with MAS1, AGTR1 and ADRA1D; increases PKA-mediated phosphorylation of FLNA at Ser-2152. Interacts (via filamin repeats 4, 9, 12, 17, 19, 21, and 23) with GP1BA (high affinity), ITGB7, ITGB2 and FBLIM1. Interacts with CEACAM1 (via cytoplasmic domain); inhibits cell migration and cell scattering by interfering with the interaction between FLNA and RALA. Interacts with FOXC1. Interacts (via calponin-homology (CH) domain 1 and filamin repeat 24) with CRMP1; the interaction alters FLNA ternary structure and thus promotes FLNA dissociation from F-actin. Interacts with DPYSL3/CRMP3 and DPYSL4/CRMP4. As to quaternary structure, interacts with integrin ITGB1 isoform 1/beta-1A and isoform 5/beta-1D. Interacts with LUZP1; the interaction is not necessary for colocalization of LUZP1 with F-actin. In terms of processing, phosphorylation at Ser-2152 is negatively regulated by the autoinhibited conformation of filamin repeats 19-21. Ligand binding induces a conformational switch triggering phosphorylation at Ser-2152 by PKA. Phosphorylation extent changes in response to cell activation. Post-translationally, polyubiquitination in the CH1 domain by a SCF-like complex containing ASB2 leads to proteasomal degradation. Prior dissociation from actin may be required to expose the target lysines. Ubiquitinated in endothelial cells by RNF213 downstream of the non-canonical Wnt signaling pathway, leading to its degradation by the proteasome. In terms of tissue distribution, ubiquitous.

It is found in the cytoplasm. Its subcellular location is the cell cortex. The protein localises to the cytoskeleton. It localises to the perikaryon. The protein resides in the cell projection. It is found in the growth cone. Its subcellular location is the podosome. Its function is as follows. Promotes orthogonal branching of actin filaments and links actin filaments to membrane glycoproteins. Anchors various transmembrane proteins to the actin cytoskeleton and serves as a scaffold for a wide range of cytoplasmic signaling proteins. Interaction with FLNB may allow neuroblast migration from the ventricular zone into the cortical plate. Tethers cell surface-localized furin, modulates its rate of internalization and directs its intracellular trafficking. Involved in ciliogenesis. Plays a role in cell-cell contacts and adherens junctions during the development of blood vessels, heart and brain organs. Plays a role in platelets morphology through interaction with SYK that regulates ITAM- and ITAM-like-containing receptor signaling, resulting in by platelet cytoskeleton organization maintenance. During the axon guidance process, required for growth cone collapse induced by SEMA3A-mediated stimulation of neurons. The chain is Filamin-A (FLNA) from Homo sapiens (Human).